Consider the following 211-residue polypeptide: Urease accessory protein UreE (211 aa).

The segment at 170–211 (EHHGHSHDRGCDHSHSHSHDHDHDHGHVHGPGCGHAPHHRHD) is disordered. Residues 176 to 196 (HDRGCDHSHSHSHDHDHDHGH) are compositionally biased toward basic and acidic residues.

Belongs to the UreE family.

The protein localises to the cytoplasm. Involved in urease metallocenter assembly. Binds nickel. Probably functions as a nickel donor during metallocenter assembly. The chain is Urease accessory protein UreE from Ralstonia nicotianae (strain ATCC BAA-1114 / GMI1000) (Ralstonia solanacearum).